The following is a 293-amino-acid chain: ATP synthase subunit gamma, mitochondrial (293 aa).

The transit peptide at 1–21 (MFALRTAARPAARSVGATRNY) directs the protein to the mitochondrion.

In terms of assembly, F-type ATP synthases have 2 components, the catalytic core F(1) and the membrane-embedded component F(0), linked together by a central stalk and a peripheral stalk. The central stalk, also called rotor shaft, is often seen as part of F(1). The peripheral stalk is seen as part of F(0). F(0) contains the membrane channel next to the rotor. F-type ATP synthases form dimers but each monomer functions independently in ATP generation. The dimer consists of 17 different polypeptides: ATP1 (subunit alpha, 3 molecules per monomer, part of F(1)), ATP2 (subunit beta, 3 copies per monomer, part of F(1)), ATP3 (subunit gamma, part of the central stalk), ATP4 (subunit b, part of the peripheral stalk), ATP5/OSCP (subunit 5/OSCP, part of the peripheral stalk), ATP6 (subunit a, part of the peripheral stalk), ATP7 (subunit d, part of the peripheral stalk), ATP8 (subunit 8, part of the peripheral stalk), OLI1 (subunit c, part of the rotor, 10 molecules per monomer), ATP14 (subunit h, part of the peripheral stalk), ATP15 (subunit epsilon, part of the central stalk), ATP16 (subunit delta, part of the central stalk), ATP17 (subunit f, part of the peripheral stalk), ATP18 (subunit i/j, part of the peripheral stalk), ATP19 (subunit k, dimer-specific, at interface between monomers), ATP20 (subunit g, at interface between monomers), TIM11 (subunit e, at interface between monomers).

It is found in the mitochondrion inner membrane. Functionally, mitochondrial membrane ATP synthase (F(1)F(0) ATP synthase or Complex V) produces ATP from ADP in the presence of a proton gradient across the membrane which is generated by electron transport complexes of the respiratory chain. F-type ATP synthases consist of two structural domains, F(1) - containing the extramembraneous catalytic core, and F(0) - containing the membrane proton channel, linked together by a central stalk and a peripheral stalk. During catalysis, ATP synthesis in the catalytic domain of F(1) is coupled via a rotary mechanism of the central stalk subunits to proton translocation. Part of the complex F(1) domain and the central stalk which is part of the complex rotary element. The gamma/ATP3 subunit protrudes into the catalytic domain formed of alpha/ATP1(3)beta/ATP2(3). Rotation of the central stalk against the surrounding alpha/ATP1(3)beta/ATP2(3) subunits leads to hydrolysis of ATP in three separate catalytic sites on the beta/ATP2 subunits. This chain is ATP synthase subunit gamma, mitochondrial, found in Yarrowia lipolytica (strain CLIB 122 / E 150) (Yeast).